Here is a 217-residue protein sequence, read N- to C-terminus: Zinc finger CCHC-type and RNA-binding motif-containing protein 1 (217 aa).

The 79-residue stretch at 10 to 88 (STVYVSNLPF…RVIKASIAID (79 aa)) folds into the RRM domain. The segment at 105–122 (SKCYECGESGHLSYACPK) adopts a CCHC-type zinc-finger fold. Positions 120–217 (CPKNMLGERE…YFSDEEELSD (98 aa)) are disordered. A compositionally biased stretch (acidic residues) spans 145 to 163 (PEEEIEEVEVSEEEGEDPA). Phosphoserine occurs at positions 155, 210, and 216.

In terms of assembly, component of the U11/U12 snRNPs that are part of the U12-type spliceosome. Interacts with ZRSR1.

Its subcellular location is the nucleus. The protein localises to the nucleoplasm. In Rattus norvegicus (Rat), this protein is Zinc finger CCHC-type and RNA-binding motif-containing protein 1 (Zcrb1).